We begin with the raw amino-acid sequence, 562 residues long: Eukaryotic translation initiation factor 3 subunit L (562 aa).

The tract at residues 1–29 (MSHAKEDYDSSYDPYSYQADYDGHTGDPK) is disordered. A compositionally biased stretch (low complexity) spans 11 to 20 (SYDPYSYQAD). One can recognise a PCI domain in the interval 329 to 535 (DSIRVFANIL…IHIADTKVAR (207 aa)).

The protein belongs to the eIF-3 subunit L family. As to quaternary structure, component of the eukaryotic translation initiation factor 3 (eIF-3) complex, which is composed of 13 subunits: eif3a, eif3b, eif3c, eif3d, eif3e, eif3f, eif3g, eif3h, eif3i, eif3j, eif3k, eif3l and eif3m.

The protein localises to the cytoplasm. In terms of biological role, component of the eukaryotic translation initiation factor 3 (eIF-3) complex, which is involved in protein synthesis of a specialized repertoire of mRNAs and, together with other initiation factors, stimulates binding of mRNA and methionyl-tRNAi to the 40S ribosome. The eIF-3 complex specifically targets and initiates translation of a subset of mRNAs involved in cell proliferation. This is Eukaryotic translation initiation factor 3 subunit L (eif3l) from Xenopus laevis (African clawed frog).